A 222-amino-acid polypeptide reads, in one-letter code: Salivary anticoagulant protein P23 (222 aa).

Positions 1-17 are cleaved as a signal peptide; that stretch reads MLTVSLLTLSLAAYASA. 4 N-linked (GlcNAc...) asparagine glycosylation sites follow: asparagine 56, asparagine 73, asparagine 109, and asparagine 114.

In terms of tissue distribution, salivary gland (at protein level). Adult midgut.

It is found in the secreted. In terms of biological role, inhibits host coagulation by delaying thrombin generation and reducing endogenous thrombin potential (ETP). This chain is Salivary anticoagulant protein P23, found in Ixodes scapularis (Black-legged tick).